A 460-amino-acid chain; its full sequence is Bifunctional protein GlmU (460 aa).

Positions 1–229 are pyrophosphorylase; that stretch reads MKNYAIILAA…FDESLGVNDR (229 aa). UDP-N-acetyl-alpha-D-glucosamine contacts are provided by residues 8 to 11, lysine 22, glutamine 72, and 77 to 78; these read LAAG and GT. Aspartate 102 is a Mg(2+) binding site. UDP-N-acetyl-alpha-D-glucosamine contacts are provided by glycine 139, glutamate 154, asparagine 169, and asparagine 227. Asparagine 227 contacts Mg(2+). Positions 230–250 are linker; that stretch reads LALAQAEVIMQERINKQHMLN. The interval 251-460 is N-acetyltransferase; the sequence is GVTLQNPAAT…RLPHHPDQPQ (210 aa). 2 residues coordinate UDP-N-acetyl-alpha-D-glucosamine: arginine 332 and lysine 350. Histidine 362 acts as the Proton acceptor in catalysis. Positions 365 and 376 each coordinate UDP-N-acetyl-alpha-D-glucosamine. Acetyl-CoA-binding positions include alanine 379, 385 to 386, serine 404, alanine 422, and arginine 439; that span reads NY.

In the N-terminal section; belongs to the N-acetylglucosamine-1-phosphate uridyltransferase family. It in the C-terminal section; belongs to the transferase hexapeptide repeat family. In terms of assembly, homotrimer. Mg(2+) serves as cofactor.

Its subcellular location is the cytoplasm. It catalyses the reaction alpha-D-glucosamine 1-phosphate + acetyl-CoA = N-acetyl-alpha-D-glucosamine 1-phosphate + CoA + H(+). It carries out the reaction N-acetyl-alpha-D-glucosamine 1-phosphate + UTP + H(+) = UDP-N-acetyl-alpha-D-glucosamine + diphosphate. It functions in the pathway nucleotide-sugar biosynthesis; UDP-N-acetyl-alpha-D-glucosamine biosynthesis; N-acetyl-alpha-D-glucosamine 1-phosphate from alpha-D-glucosamine 6-phosphate (route II): step 2/2. It participates in nucleotide-sugar biosynthesis; UDP-N-acetyl-alpha-D-glucosamine biosynthesis; UDP-N-acetyl-alpha-D-glucosamine from N-acetyl-alpha-D-glucosamine 1-phosphate: step 1/1. Its pathway is bacterial outer membrane biogenesis; LPS lipid A biosynthesis. Functionally, catalyzes the last two sequential reactions in the de novo biosynthetic pathway for UDP-N-acetylglucosamine (UDP-GlcNAc). The C-terminal domain catalyzes the transfer of acetyl group from acetyl coenzyme A to glucosamine-1-phosphate (GlcN-1-P) to produce N-acetylglucosamine-1-phosphate (GlcNAc-1-P), which is converted into UDP-GlcNAc by the transfer of uridine 5-monophosphate (from uridine 5-triphosphate), a reaction catalyzed by the N-terminal domain. In Streptococcus equi subsp. zooepidemicus (strain ATCC 35246 / C74-63), this protein is Bifunctional protein GlmU.